A 447-amino-acid chain; its full sequence is Asparagine--tRNA ligase (447 aa).

It belongs to the class-II aminoacyl-tRNA synthetase family. In terms of assembly, homodimer.

Its subcellular location is the cytoplasm. It catalyses the reaction tRNA(Asn) + L-asparagine + ATP = L-asparaginyl-tRNA(Asn) + AMP + diphosphate + H(+). This Lactococcus lactis subsp. cremoris (strain SK11) protein is Asparagine--tRNA ligase.